The primary structure comprises 538 residues: Frizzled-4 (538 aa).

Residues 1–37 (MAWQGTGPSVRGMPGGVRLRLGLLLLQLLLLQRPALG) form the signal peptide. The Extracellular segment spans residues 38–213 (FGDEEERRCD…KCGYDAGLYS (176 aa)). One can recognise an FZ domain in the interval 41 to 162 (EEERRCDPIR…NDHNHMCMEG (122 aa)). 8 disulfides stabilise this stretch: Cys-46/Cys-107, Cys-54/Cys-100, Cys-91/Cys-129, Cys-118/Cys-159, Cys-122/Cys-146, Cys-182/Cys-201, Cys-205/Cys-283, and Cys-303/Cys-378. Asn-60 is a glycosylation site (N-linked (GlcNAc...) asparagine). Asn-145 carries N-linked (GlcNAc...) asparagine glycosylation. The chain crosses the membrane as a helical span at residues 214 to 244 (RSAKEFTDIWMAVWASLCFISTTFTVLTFLI). Topologically, residues 245-250 (DSSRFS) are cytoplasmic. Residues 251 to 276 (YPERPIIFLSMCYNIYSIAYIVRLTV) form a helical membrane-spanning segment. Residues 277 to 300 (GRERISCDFEEAAEPVLIQEGLKN) are Extracellular-facing. A helical membrane pass occupies residues 301-334 (TGCAIIFLLMYFFGMASSIWWVILTLTWFLAAGL). Residues 335–337 (KWG) lie on the Cytoplasmic side of the membrane. A helical membrane pass occupies residues 338 to 366 (HEAIEMHSSYFHIAAWAIPAVKTIVILIM). Over 367-384 (RLVDADELTGLCYVGNQS) the chain is Extracellular. The N-linked (GlcNAc...) asparagine glycan is linked to Asn-382. Residues 385–419 (LDALTGFVVAPLFTYLVIGTLFIAAGLVALFKIRS) form a helical membrane-spanning segment. The Cytoplasmic portion of the chain corresponds to 420 to 432 (NLQKDGTKTDKLE). The helical transmembrane segment at 433 to 461 (RLMVKIGVFSVLYTVPATCVIACYFYEIS) threads the bilayer. Residues 462 to 474 (NWALFRYSADDSN) lie on the Extracellular side of the membrane. Residues 475–496 (MAVEMLKIFMSLLVGITSGMWI) form a helical membrane-spanning segment. Residues 497 to 538 (WSAKTLHTWQKCSNRLVNSGKVKREKRGNGWVKPGKGNETVV) lie on the Cytoplasmic side of the membrane. Residues 500–505 (KTLHTW) carry the Lys-Thr-X-X-X-Trp motif, mediates interaction with the PDZ domain of Dvl family members motif. The PDZ-binding motif lies at 536–538 (TVV).

The protein belongs to the G-protein coupled receptor Fz/Smo family. In terms of assembly, interacts with MAGI3 and NDP. Component of a complex, at least composed of TSPAN12, FZD4 and norrin (NDP). Interacts (via FZ domain) with TSKU; TSKU competes with WNT2B for binding to FZD4, inhibiting Wnt signaling and repressing peripheral eye development. Interacts with glypican GPC3. Post-translationally, ubiquitinated by ZNRF3, leading to its degradation by the proteasome.

It localises to the cell membrane. Its function is as follows. Receptor for Wnt proteins. Most of frizzled receptors are coupled to the beta-catenin (CTNNB1) canonical signaling pathway, which leads to the activation of disheveled proteins, inhibition of GSK-3 kinase, nuclear accumulation of beta-catenin (CTNNB1) and activation of Wnt target genes. Plays a critical role in retinal vascularization by acting as a receptor for Wnt proteins and norrin (NDP). In retina, it can be both activated by Wnt protein-binding, but also by a Wnt-independent signaling via binding of norrin (NDP), promoting in both cases beta-catenin (CTNNB1) accumulation and stimulation of LEF/TCF-mediated transcriptional programs. A second signaling pathway involving PKC and calcium fluxes has been seen for some family members, but it is not yet clear if it represents a distinct pathway or if it can be integrated in the canonical pathway, as PKC seems to be required for Wnt-mediated inactivation of GSK-3 kinase. Both pathways seem to involve interactions with G-proteins. May be involved in transduction and intercellular transmission of polarity information during tissue morphogenesis and/or in differentiated tissues. This is Frizzled-4 (Fzd4) from Rattus norvegicus (Rat).